Here is a 295-residue protein sequence, read N- to C-terminus: Ribosomal RNA small subunit methyltransferase H (295 aa).

Residues 36–38 (GGH), aspartate 56, leucine 90, aspartate 104, and histidine 111 each bind S-adenosyl-L-methionine.

It belongs to the methyltransferase superfamily. RsmH family.

It is found in the cytoplasm. The catalysed reaction is cytidine(1402) in 16S rRNA + S-adenosyl-L-methionine = N(4)-methylcytidine(1402) in 16S rRNA + S-adenosyl-L-homocysteine + H(+). Functionally, specifically methylates the N4 position of cytidine in position 1402 (C1402) of 16S rRNA. In Dictyoglomus turgidum (strain DSM 6724 / Z-1310), this protein is Ribosomal RNA small subunit methyltransferase H.